Reading from the N-terminus, the 364-residue chain is Ribosomal RNA large subunit methyltransferase F (364 aa).

Residues 1-30 (MTNKRKSAKPLEPAKRAPKPRTKKSRDLSA) are disordered.

This sequence belongs to the methyltransferase superfamily. METTL16/RlmF family.

The protein localises to the cytoplasm. The enzyme catalyses adenosine(1618) in 23S rRNA + S-adenosyl-L-methionine = N(6)-methyladenosine(1618) in 23S rRNA + S-adenosyl-L-homocysteine + H(+). In terms of biological role, specifically methylates the adenine in position 1618 of 23S rRNA. In Vibrio vulnificus (strain CMCP6), this protein is Ribosomal RNA large subunit methyltransferase F.